A 109-amino-acid chain; its full sequence is Tektin-3 (109 aa).

Belongs to the tektin family. As to quaternary structure, microtubule inner protein component of sperm flagellar doublet microtubules. Interacts with TEKT1, TEKT2, TEKT4 and TEKT5. Interacts with CCDC38. Post-translationally, N- and O-glycosylated. May be proteolytically processed during the epididymal transit of spermatozoa. In terms of processing, ubiquitinated, leading to its degradation. Deubiquitinated by USP16, promoting its stability.

Its subcellular location is the cytoplasm. It localises to the cytoskeleton. It is found in the cilium axoneme. The protein resides in the flagellum axoneme. The protein localises to the cytoplasmic vesicle. Its subcellular location is the secretory vesicle. It localises to the acrosome outer membrane. Microtubule inner protein (MIP) part of the dynein-decorated doublet microtubules (DMTs) in cilia and flagellar axoneme. Forms filamentous polymers in the walls of ciliary and flagellar microtubules. Required for normal sperm mobility. This Mesocricetus auratus (Golden hamster) protein is Tektin-3.